The sequence spans 330 residues: RNA polymerase sigma factor RpoS (330 aa).

Residues 56-89 form a sigma-70 factor domain-1 region; that stretch reads DATQLYLGEIGYSPLLTAEEEVYFARRALRGDVA. A sigma-70 factor domain-2 region spans residues 94–164; that stretch reads MIESNLRLVV…ERAIMNQTRT (71 aa). The Interaction with polymerase core subunit RpoC motif lies at 118-121; sequence DLIE. Positions 174 to 249 are sigma-70 factor domain-3; sequence ELNVYLRTAR…DEKENGPEDT (76 aa). Residues 262–315 form a sigma-70 factor domain-4 region; that stretch reads WLFELNAKQREVLARRFGLLGYEAATLEDVGREIGLTRERVRQIQVEGLRRLRE. The H-T-H motif DNA-binding region spans 288-307; sequence LEDVGREIGLTRERVRQIQV.

The protein belongs to the sigma-70 factor family. RpoS subfamily. In terms of assembly, interacts with the RNA polymerase core enzyme.

The protein localises to the cytoplasm. In terms of biological role, sigma factors are initiation factors that promote the attachment of RNA polymerase to specific initiation sites and are then released. This sigma factor is the master transcriptional regulator of the stationary phase and the general stress response. The protein is RNA polymerase sigma factor RpoS of Shigella flexneri.